Consider the following 254-residue polypeptide: 3-deoxy-manno-octulosonate cytidylyltransferase (254 aa).

Belongs to the KdsB family.

It is found in the cytoplasm. The catalysed reaction is 3-deoxy-alpha-D-manno-oct-2-ulosonate + CTP = CMP-3-deoxy-beta-D-manno-octulosonate + diphosphate. It functions in the pathway nucleotide-sugar biosynthesis; CMP-3-deoxy-D-manno-octulosonate biosynthesis; CMP-3-deoxy-D-manno-octulosonate from 3-deoxy-D-manno-octulosonate and CTP: step 1/1. The protein operates within bacterial outer membrane biogenesis; lipopolysaccharide biosynthesis. In terms of biological role, activates KDO (a required 8-carbon sugar) for incorporation into bacterial lipopolysaccharide in Gram-negative bacteria. In Pseudomonas aeruginosa (strain LESB58), this protein is 3-deoxy-manno-octulosonate cytidylyltransferase.